The sequence spans 352 residues: Schlafen-like protein 4 (352 aa).

Positions 87 to 235 (FEYQSNFSEV…SDKVYQISSG (149 aa)) are SLFN-like fold. The chain crosses the membrane as a helical span at residues 326–343 (IQNIGWIFFGTALSCCIY).

This sequence belongs to the Schlafen family. In terms of assembly, component of the PUCH (precursor of 21U RNA 5'-end cleavage holoenzyme) complex; consisting of tofu-1, tofu-2 and either slfl-3 or slfl-4.

The protein resides in the membrane. In terms of biological role, component of the trimeric PUCH (precursor of 21U RNA 5'-end cleavage holoenzyme) complex, that acts as an endoribonuclease processing the 5'-end of precursor Piwi-interacting RNAs (piRNAs). The PUCH complex consists of tofu-1, tofu-2 and either slfl-3 or slfl-4, where tofu-2 exhibits endoribonuclease activity. PUCH-mediated processing strictly requires a 7-methyl-G cap (m7 G-cap) and an uracil at position three (U3). PUCH also exhibits a strict bias for piRNA precursors with an A or G at position 1. Mature piRNA production is enhanced by the interaction of PUCH with the PETISCO complex, which is stabilizing piRNA precursors and allows their processing by PUCH. In Caenorhabditis elegans, this protein is Schlafen-like protein 4.